The sequence spans 222 residues: MKLNTYIDHTKLGPIVTLSDIDTLIDEAIEHQFKSVCVSPIWVAHAKSRLEGTGVLVCTVVGFPFGTHLPKVKAFETKEAIKQGADEIDMVVDVDAVRSKDRSRVSKDIKAVVKAAQGRTVKVIIETAYLDKKQITFVSKLAVKAGATFVKTSTGYASRGASVEDIVTIKKAVGDDALIKASGGIRSKEDALLMIEKGANRLGTSSGVKLIKGETSDGNTTY.

Catalysis depends on D89, which acts as the Proton donor/acceptor. K151 serves as the catalytic Schiff-base intermediate with acetaldehyde. K180 (proton donor/acceptor) is an active-site residue.

This sequence belongs to the DeoC/FbaB aldolase family. DeoC type 1 subfamily.

It is found in the cytoplasm. The enzyme catalyses 2-deoxy-D-ribose 5-phosphate = D-glyceraldehyde 3-phosphate + acetaldehyde. The protein operates within carbohydrate degradation; 2-deoxy-D-ribose 1-phosphate degradation; D-glyceraldehyde 3-phosphate and acetaldehyde from 2-deoxy-alpha-D-ribose 1-phosphate: step 2/2. In terms of biological role, catalyzes a reversible aldol reaction between acetaldehyde and D-glyceraldehyde 3-phosphate to generate 2-deoxy-D-ribose 5-phosphate. In Acholeplasma laidlawii (strain PG-8A), this protein is Deoxyribose-phosphate aldolase.